A 132-amino-acid chain; its full sequence is Holo-[acyl-carrier-protein] synthase (132 aa).

Mg(2+)-binding residues include aspartate 8 and glutamate 62.

Belongs to the P-Pant transferase superfamily. AcpS family. Mg(2+) serves as cofactor.

The protein localises to the cytoplasm. The catalysed reaction is apo-[ACP] + CoA = holo-[ACP] + adenosine 3',5'-bisphosphate + H(+). In terms of biological role, transfers the 4'-phosphopantetheine moiety from coenzyme A to a Ser of acyl-carrier-protein. The sequence is that of Holo-[acyl-carrier-protein] synthase from Leptothrix cholodnii (strain ATCC 51168 / LMG 8142 / SP-6) (Leptothrix discophora (strain SP-6)).